The following is a 619-amino-acid chain: Secretogranin-2 (619 aa).

The first 30 residues, 1-30 (MTESKAYRFGAVLLLIHLIFLVPGTEAASF), serve as a signal peptide directing secretion. Residue Tyr153 is modified to Sulfotyrosine. Phosphoserine occurs at positions 176 and 270. The interval 247 to 307 (VGGEDWSPME…RKESKDQLSE (61 aa)) is disordered. Composition is skewed to basic and acidic residues over residues 255–286 (MEEK…EMKR) and 295–307 (EGNR…QLSE). A phosphoserine mark is found at Ser434, Ser534, Ser557, and Ser558.

Belongs to the chromogranin/secretogranin protein family. Interacts with Secretogranin III/SCG3. Brain. Expression in the pituitary is restricted to the anterior lobe. Expression in the hypothalamus is observed in the neuronal cells and neurons of arcuate nucleus, supraoptic nucleus and median eminence (at protein level).

It is found in the secreted. Neuroendocrine protein of the granin family that regulates the biogenesis of secretory granules. This Rattus norvegicus (Rat) protein is Secretogranin-2 (Scg2).